The chain runs to 406 residues: Peptidyl-alpha-hydroxyglycine alpha-amidating lyase 2 (406 aa).

A signal peptide spans 1–19 (MSRLLFVALLAISLGYVAS). NHL repeat units follow at residues 168–209 (GAIK…FKPF), 218–261 (GKRF…FNAA), 264–308 (LLRT…PKAG), and 358–402 (DPRS…RVWK). Disulfide bonds link cysteine 231-cysteine 251 and cysteine 293-cysteine 304.

This sequence belongs to the peptidyl-alpha-hydroxyglycine alpha-amidating lyase family. Zn(2+) serves as cofactor. Post-translationally, N-glycosylated. As to expression, only found in a subset of neurons distributed throughout all levels of the central nervous system (CNS). Present in at least some neuroendocrine cells. In adult brains, it is only present in a small handful of cells, the majority of which being distributed in distal parts of the medulla, with a higher expression in the posterior surface of the brain (at protein level).

It is found in the secreted. It carries out the reaction a [peptide]-C-terminal (2S)-2-hydroxyglycine = a [peptide]-C-terminal amide + glyoxylate. Peptidyl-alpha-hydroxylglycine alpha-amidating lyase that catalyzes an essential reaction in C-terminal alpha-amidation of peptides. Mediates the dismutation of the unstable peptidyl(2-hydroxyglycine) intermediate to glyoxylate and the corresponding desglycine peptide amide. C-terminal amidation of peptides such as neuropeptides is essential for full biological activity. The polypeptide is Peptidyl-alpha-hydroxyglycine alpha-amidating lyase 2 (Pal2) (Drosophila melanogaster (Fruit fly)).